The sequence spans 44 residues: MESLLLARLPEAYVVFSPLVDVFPVIPVFFLLLAFVWQAAVGFR.

Residues 1–7 constitute a propeptide that is removed on maturation; it reads MESLLLA. Residues 23 to 43 traverse the membrane as a helical segment; it reads FPVIPVFFLLLAFVWQAAVGF.

This sequence belongs to the PsbK family. In terms of assembly, PSII is composed of 1 copy each of membrane proteins PsbA, PsbB, PsbC, PsbD, PsbE, PsbF, PsbH, PsbI, PsbJ, PsbK, PsbL, PsbM, PsbT, PsbX, PsbY, PsbZ, Psb30/Ycf12, at least 3 peripheral proteins of the oxygen-evolving complex and a large number of cofactors. It forms dimeric complexes.

It is found in the plastid. The protein resides in the chloroplast thylakoid membrane. One of the components of the core complex of photosystem II (PSII). PSII is a light-driven water:plastoquinone oxidoreductase that uses light energy to abstract electrons from H(2)O, generating O(2) and a proton gradient subsequently used for ATP formation. It consists of a core antenna complex that captures photons, and an electron transfer chain that converts photonic excitation into a charge separation. The protein is Photosystem II reaction center protein K of Thalassiosira pseudonana (Marine diatom).